The following is a 352-amino-acid chain: Glucose 1-dehydrogenase 1 (352 aa).

Cys35 lines the Zn(2+) pocket. Residue Thr37 participates in substrate binding. 2 residues coordinate Zn(2+): His60 and Glu61. Asn83 serves as a coordination point for substrate. Positions 87, 90, 93, and 101 each coordinate Zn(2+). Positions 108, 144, and 148 each coordinate substrate. Residue Gln144 participates in Zn(2+) binding. NADP(+)-binding positions include 182–185 (TGTI), 204–206 (NKR), 264–266 (FGF), 292–294 (LIN), and Lys341. Asn294 lines the substrate pocket.

This sequence belongs to the zinc-containing alcohol dehydrogenase family. Glucose 1-dehydrogenase subfamily. Requires Zn(2+) as cofactor.

The enzyme catalyses D-glucose + NAD(+) = D-glucono-1,5-lactone + NADH + H(+). It carries out the reaction D-glucose + NADP(+) = D-glucono-1,5-lactone + NADPH + H(+). In terms of biological role, catalyzes the NAD(P)(+)-dependent oxidation of D-glucose to D-gluconate via gluconolactone. Can utilize both NAD(+) and NADP(+) as electron acceptor. Is involved in the degradation of glucose through a non-phosphorylative variant of the Entner-Doudoroff pathway. In Picrophilus torridus (strain ATCC 700027 / DSM 9790 / JCM 10055 / NBRC 100828 / KAW 2/3), this protein is Glucose 1-dehydrogenase 1.